Reading from the N-terminus, the 7079-residue chain is Replicase polyprotein 1ab (7079 aa).

Positions T12 to G127 constitute a CoV Nsp1 globular domain. The BetaCoV Nsp1 C-terminal domain occupies E148 to G179. In terms of domain architecture, CoV Nsp2 N-terminal spans T183 to R456. Zn(2+) contacts are provided by C200, C231, H234, H236, C323, C326, C341, C344, C370, C373, H382, and C416. The C2H2 stretch occupies residues C200 to H236. Positions C323 to C344 are C4. The interval C370–C416 is C2HC. Positions R458 to M688 constitute a CoV Nsp2 middle domain. In terms of domain architecture, CoV Nsp2 C-terminal spans I690–G818. One can recognise a Ubiquitin-like 1 domain in the interval K822–E930. Macro domains are found at residues V1001–L1167, K1213–K1341, and I1349–S1476. The 67-residue stretch at T1478–S1544 folds into the DPUP domain. The Ubiquitin-like 2 domain occupies V1548 to V1603. The region spanning Y1617–E1881 is the Peptidase C16 domain. C1657 serves as the catalytic For PL-PRO activity. C1735, C1738, C1770, and C1772 together coordinate Zn(2+). The C4-type zinc finger occupies C1735–C1772. Active-site for PL-PRO activity residues include H1818 and D1832. A Nucleic acid-binding domain is found at P1894–T2004. One can recognise a G2M domain in the interval P2029–N2138. The tract at residues L2098–W2377 is HD1. The helical transmembrane segment at L2209–V2229 threads the bilayer. The 3Ecto domain occupies T2230–D2300. 2 disulfides stabilise this stretch: C2246–C2274 and C2265–C2271. The next 2 helical transmembrane spans lie at W2310–M2330 and M2357–W2377. The tract at residues K2378–D2468 is Y1. The CoV Nsp3 Y domain maps to K2378–G2746. Zn(2+) is bound by residues H2382, C2387, C2392, C2395, C2428, H2431, C2435, and C2438. Residues H2382–C2395 are ZF1. The ZF2 stretch occupies residues C2428–C2438. Residues Q2469–V2563 form a Y2 region. A coV-Y region spans residues Q2469–G2746. The Y3 stretch occupies residues G2564 to D2645. A Y4 region spans residues L2646–G2746. 7 consecutive transmembrane segments (helical) span residues L2761–V2781, P2998–V3018, A3028–M3048, V3060–A3080, F3083–V3103, W3111–I3131, and V3148–L3168. An HD2 region spans residues L2761–L3168. The 99-residue stretch at V3148–Q3246 folds into the Nsp4C domain. One can recognise a Peptidase C30 domain in the interval S3247 to Q3552. Catalysis depends on for 3CL-PRO activity residues H3287 and C3391. 7 consecutive transmembrane segments (helical) span residues F3570–Y3590, N3592–V3612, F3618–M3638, C3665–Y3684, V3691–L3710, I3734–I3754, and I3762–L3782. Positions F3570–L3782 are HD3. Positions S3843–Q3925 constitute a RdRp Nsp7 cofactor domain. A RdRp Nsp8 cofactor domain is found at A3926–Q4123. Positions N4124–Q4236 constitute a Nsp9 ssRNA-binding domain. An ExoN/MTase coactivator domain is found at A4237–Q4375. C4310, C4313, H4319, C4326, C4353, C4356, C4364, and C4366 together coordinate Zn(2+). 2 zinc fingers span residues C4310–C4326 and C4353–C4366. The region spanning F4382–L4636 is the NiRAN domain. Mn(2+) is bound by residues N4584 and D4593. Residues I4641 to S4739 enclose the Nsp12 Interface domain. 5 residues coordinate Zn(2+): H4670, C4676, C4681, C4685, and C4862. The Nsp12 RNA-dependent RNA polymerase domain maps to R4740–Q5307. The segment at S4742 to A4956 is rdRp Fingers N-ter. Residues T4957 to P4995 form a rdRp Palm N-ter region. In terms of domain architecture, RdRp catalytic spans P4987–G5149. Residues K4996 to G5054 form a rdRp Fingers C-ter region. Residues H5017, C5020, and C5021 each contribute to the Zn(2+) site. Residues T5055–Q5190 form a rdRp Palm C-ter region. Active-site residues include S5134, D5135, and D5136. Residues H5191–Q5307 form a rdRp Thumb region. Positions A5308–D5420 constitute a CV ZBD domain. The Zn(2+) site is built by C5312, C5315, C5323, C5326, C5333, C5336, H5340, H5346, C5357, C5362, C5379, and H5382. Residues N5564–L5745 form the (+)RNA virus helicase ATP-binding domain. G5589 to S5596 lines the ATP pocket. Residues G5746–L5915 form the (+)RNA virus helicase C-terminal domain. An ExoN domain is found at M5980–V6195. Active-site residues include D5998, E6000, and E6099. Zn(2+) is bound by residues C6115, C6118, C6134, H6137, H6165, C6169, and H6172. Active-site residues include H6176 and D6181. C6187 is a Zn(2+) binding site. The 232-residue stretch at Y6204–Q6435 folds into the N7-MTase domain. D6239–A6245 is a binding site for S-adenosyl-L-methionine. A gpppA-binding region spans residues C6322–T6336. Residues C6360, C6381, C6392, and H6395 each contribute to the Zn(2+) site. The region spanning S6436 to R6496 is the Nsp15 N-terminal oligomerization domain. The 126-residue stretch at N6497–Q6622 folds into the AV-Nsp11N/CoV-Nsp15M domain. The NendoU domain occupies K6639 to P6778. Residues H6669, H6684, K6724, K6827, D6911, K6951, and E6984 contribute to the active site. The Nidovirus-type SAM-dependent 2'-O-MTase domain occupies S6783–V7077.

It belongs to the coronaviruses polyprotein 1ab family. Interacts with host PHB and PHB2. As to quaternary structure, interacts with papain-like protease nsp3 and non-structural protein 6. In terms of assembly, monomer. Homodimer. Only the homodimer shows catalytic activity. Interacts with nsp8 and nsp12 to form the replication-transcription complex (RTC): nsp12, nsp7, two subunits of nsp8, and up to two subunits of nsp13. As to quaternary structure, interacts with nsp7, nsp13 and nsp12 to form the replication-transcription complex (RTC): nsp12, nsp7, two subunits of nsp8, and up to two subunits of nsp13. In terms of assembly, interacts with nsp12. Interacts with proofreading exoribonuclease nsp14 and 2'-O-methyltransferase nsp16; these interactions enhance nsp14 and nsp16 enzymatic activities. As to quaternary structure, interacts with nsp7 and nsp8 to form the replication-transcription complex (RTC): nsp12, nsp7, two subunits of nsp8, and up to two subunits of nsp13. Interacts with nsp9. In terms of assembly, interacts with nsp8 to form the replication-transcription complex (RTC): nsp12, nsp7, two subunits of nsp8, and up to two subunits of nsp13. Mn(2+) serves as cofactor. It depends on Mg(2+) as a cofactor. In terms of processing, specific enzymatic cleavages in vivo by its own proteases yield mature proteins. 3CL-PRO and PL-PRO proteinases are autocatalytically processed.

It localises to the host membrane. Its subcellular location is the host cytoplasm. It is found in the host perinuclear region. The protein resides in the host endoplasmic reticulum-Golgi intermediate compartment. It carries out the reaction RNA(n) + a ribonucleoside 5'-triphosphate = RNA(n+1) + diphosphate. The enzyme catalyses ATP + H2O = ADP + phosphate + H(+). It catalyses the reaction Thiol-dependent hydrolysis of ester, thioester, amide, peptide and isopeptide bonds formed by the C-terminal Gly of ubiquitin (a 76-residue protein attached to proteins as an intracellular targeting signal).. The catalysed reaction is a 5'-end (N(7)-methyl 5'-triphosphoguanosine)-ribonucleoside in mRNA + S-adenosyl-L-methionine = a 5'-end (N(7)-methyl 5'-triphosphoguanosine)-(2'-O-methyl-ribonucleoside) in mRNA + S-adenosyl-L-homocysteine + H(+). It carries out the reaction uridylyl-uridylyl-ribonucleotide-RNA = a 3'-end uridylyl-2',3'-cyclophospho-uridine-RNA + a 5'-end dephospho-ribonucleoside-RNA. The enzyme catalyses a 5'-end diphospho-ribonucleoside in mRNA + GTP + H(+) = a 5'-end (5'-triphosphoguanosine)-ribonucleoside in mRNA + diphosphate. It catalyses the reaction a 5'-end (5'-triphosphoguanosine)-ribonucleoside in mRNA + S-adenosyl-L-methionine = a 5'-end (N(7)-methyl 5'-triphosphoguanosine)-ribonucleoside in mRNA + S-adenosyl-L-homocysteine. The replicase polyprotein of coronaviruses is a multifunctional protein: it contains the activities necessary for the transcription of negative stranded RNA, leader RNA, subgenomic mRNAs and progeny virion RNA as well as proteinases responsible for the cleavage of the polyprotein into functional products. Functionally, inhibits host translation by interacting with the 40S ribosomal subunit. The nsp1-40S ribosome complex further induces an endonucleolytic cleavage near the 5'UTR of host mRNAs, targeting them for degradation. Viral mRNAs are not susceptible to nsp1-mediated endonucleolytic RNA cleavage thanks to the presence of a 5'-end leader sequence and are therefore protected from degradation. By suppressing host gene expression, nsp1 facilitates efficient viral gene expression in infected cells and evasion from host immune response. Its function is as follows. May play a role in the modulation of host cell survival signaling pathway by interacting with host PHB and PHB2. Indeed, these two proteins play a role in maintaining the functional integrity of the mitochondria and protecting cells from various stresses. In terms of biological role, responsible for the cleavages located at the N-terminus of the replicase polyprotein. In addition, PL-PRO possesses a deubiquitinating/deISGylating activity and processes both 'Lys-48'- and 'Lys-63'-linked polyubiquitin chains from cellular substrates. Participates together with nsp4 in the assembly of virally-induced cytoplasmic double-membrane vesicles necessary for viral replication. Antagonizes innate immune induction of type I interferon by blocking the phosphorylation, dimerization and subsequent nuclear translocation of host IRF3. Also prevents host NF-kappa-B signaling. Participates in the assembly of virally-induced cytoplasmic double-membrane vesicles necessary for viral replication. Functionally, cleaves the C-terminus of replicase polyprotein at 11 sites. Recognizes substrates containing the core sequence [ILMVF]-Q-|-[SGACN]. Also able to bind an ADP-ribose-1''-phosphate (ADRP). Its function is as follows. Plays a role in the initial induction of autophagosomes from host endoplasmic reticulum. Later, limits the expansion of these phagosomes that are no longer able to deliver viral components to lysosomes. In terms of biological role, forms a hexadecamer with nsp8 (8 subunits of each) that may participate in viral replication by acting as a primase. Alternatively, may synthesize substantially longer products than oligonucleotide primers. Forms a hexadecamer with nsp7 (8 subunits of each) that may participate in viral replication by acting as a primase. Alternatively, may synthesize substantially longer products than oligonucleotide primers. Functionally, forms a primer, NSP9-pU, which is utilized by the polymerase for the initiation of RNA chains. Interacts with ribosome signal recognition particle RNA (SRP). Together with NSP8, suppress protein integration into the cell membrane, thereby disrupting host immune defenses. Its function is as follows. Plays a pivotal role in viral transcription by stimulating both nsp14 3'-5' exoribonuclease and nsp16 2'-O-methyltransferase activities. Therefore plays an essential role in viral mRNAs cap methylation. In terms of biological role, RNA-directed RNA polymerase that catalyzes the transcription of viral genomic and subgenomic RNAs. Acts in complex with nsp7 and nsp8 to transcribe both the minus and positive strands of genomic RNA. The kinase-like NiRAN domain of NSP12 attaches one or more nucleotides to the amino terminus of NSP9, forming a covalent RNA-protein intermediate that serves as transcription/replication primer. Subgenomic RNAs (sgRNAs) are formed by discontinuous transcription: The polymerase has the ability to pause at transcription-regulating sequences (TRS) and jump to the leader TRS, resulting in a major deletion. This creates a series of subgenomic RNAs that are replicated, transcribed and translated. In addition, Nsp12 is a subunit of the viral RNA capping enzyme that catalyzes the RNA guanylyltransferase reaction for genomic and sub-genomic RNAs. Subsequently, the NiRAN domain transfers RNA to GDP, and forms the core cap structure GpppA-RNA. Multi-functional protein with a zinc-binding domain in N-terminus displaying RNA and DNA duplex-unwinding activities with 5' to 3' polarity. Activity of helicase is dependent on magnesium. Functionally, plays a role in viral RNA synthesis through two distinct activities. The N7-guanine methyltransferase activity plays a role in the formation of the cap structure GpppA-RNA. The proofreading exoribonuclease reduces the sensitivity of the virus to RNA mutagens during replication. This activity acts on both ssRNA and dsRNA in a 3'-5' direction. Its function is as follows. Plays a role in viral transcription/replication and prevents the simultaneous activation of host cell dsRNA sensors, such as MDA5/IFIH1, OAS, and PKR. Acts by degrading the 5'-polyuridines generated during replication of the poly(A) region of viral genomic and subgenomic RNAs. Catalyzes a two-step reaction in which a 2'3'-cyclic phosphate (2'3'-cP) is first generated by 2'-O transesterification, which is then hydrolyzed to a 3'-phosphate (3'-P). If not degraded, poly(U) RNA would hybridize with poly(A) RNA tails and activate host dsRNA sensors. In terms of biological role, methyltransferase that mediates mRNA cap 2'-O-ribose methylation to the 5'-cap structure of viral mRNAs. N7-methyl guanosine cap is a prerequisite for binding of nsp16. Therefore plays an essential role in viral mRNAs cap methylation which is essential to evade immune system. This Bat coronavirus 279/2005 (BtCoV) protein is Replicase polyprotein 1ab (rep).